A 161-amino-acid chain; its full sequence is MVEQKDKYRPCVGIMLFNKQGHVFIGKRFDSDSYWQMPQGGIDDGEKLEQAALRELLEEVGTDKAKIIAKNKDWIYYNLPEEVIPTCWNGRYSGQKQRWFLMKFYGEGKDININYTDHPEFKEWRWQSVDNLVAGAIPFKKEVYKTVIEEFSSQIKVSIIK.

Positions 7 to 149 (KYRPCVGIML…KKEVYKTVIE (143 aa)) constitute a Nudix hydrolase domain. The short motif at 40-61 (GGIDDGEKLEQAALRELLEEVG) is the Nudix box element.

Belongs to the Nudix hydrolase family. RppH subfamily. A divalent metal cation serves as cofactor.

Functionally, accelerates the degradation of transcripts by removing pyrophosphate from the 5'-end of triphosphorylated RNA, leading to a more labile monophosphorylated state that can stimulate subsequent ribonuclease cleavage. This is RNA pyrophosphohydrolase from Wolbachia sp. subsp. Brugia malayi (strain TRS).